The sequence spans 281 residues: ATP synthase gamma chain (281 aa).

Belongs to the ATPase gamma chain family. In terms of assembly, F-type ATPases have 2 components, CF(1) - the catalytic core - and CF(0) - the membrane proton channel. CF(1) has five subunits: alpha(3), beta(3), gamma(1), delta(1), epsilon(1). CF(0) has three main subunits: a, b and c.

The protein localises to the cell membrane. Functionally, produces ATP from ADP in the presence of a proton gradient across the membrane. The gamma chain is believed to be important in regulating ATPase activity and the flow of protons through the CF(0) complex. This Mesoplasma florum (strain ATCC 33453 / NBRC 100688 / NCTC 11704 / L1) (Acholeplasma florum) protein is ATP synthase gamma chain.